The chain runs to 416 residues: Prostacyclin receptor (416 aa).

Over 1–45 the chain is Extracellular; the sequence is MVASGGRPDGPPSITPESPLIVGGREWQGMAGSCWNITYVQDSVG. 2 cysteine pairs are disulfide-bonded: Cys-34-Cys-194 and Cys-121-Cys-199. The N-linked (GlcNAc...) asparagine glycan is linked to Asn-36. A helical membrane pass occupies residues 46–67; it reads PATSTLMFVAGVVGNGLALGIL. Residues 68-80 lie on the Cytoplasmic side of the membrane; the sequence is GARRRSHPSAFAV. The helical transmembrane segment at 81-105 threads the bilayer; that stretch reads LVTGLAVTDLLGTCFLSPAVFVAYA. The Extracellular portion of the chain corresponds to 106–123; it reads RNSSLLGLAHGGTMLCDT. A helical membrane pass occupies residues 124–144; sequence FAFAMTFFGLASTLILFAMAV. Residues 145–163 lie on the Cytoplasmic side of the membrane; sequence ERCLALSHPYLYAQLDGPR. The chain crosses the membrane as a helical span at residues 164 to 187; that stretch reads CARLALPAIYAFCCLFCSLPLLGL. Topologically, residues 188-215 are extracellular; sequence GEHQQYCPGSWCFIRMRSPQPGGCAFSL. The helical transmembrane segment at 216–237 threads the bilayer; sequence AYASLMALLVTSIFFCNGSVTL. The Cytoplasmic segment spans residues 238 to 264; sequence SLCHMYRQQRRHHGSFVPTSRAREDEV. Residues 265–289 form a helical membrane-spanning segment; the sequence is YHLILLALMTGIMAVCSLPLTIRGF. Residues 290–302 are Extracellular-facing; the sequence is TQAIAPDSREMGD. A helical transmembrane segment spans residues 303 to 323; it reads LHAFRFNAFNPILDPWVFILF. The Cytoplasmic portion of the chain corresponds to 324–416; it reads RKAVFQRLKF…TEAVVACSLC (93 aa). Ser-366 is modified (phosphoserine). Cys-413 carries the post-translational modification Cysteine methyl ester. Cys-413 is lipidated: S-farnesyl cysteine. The propeptide at 414–416 is removed in mature form; sequence SLC.

The protein belongs to the G-protein coupled receptor 1 family. Interacts (non-isoprenylated C-terminus) with PDZK1. In terms of processing, isoprenylation does not influence ligand binding but is required for efficient coupling to the effectors adenylyl cyclase and phospholipase C.

It is found in the cell membrane. Functionally, receptor for prostacyclin (prostaglandin I2 or PGI2). The activity of this receptor is mediated by G(s) proteins which activate adenylate cyclase. The chain is Prostacyclin receptor (Ptgir) from Rattus norvegicus (Rat).